A 154-amino-acid chain; its full sequence is 3-hydroxyacyl-[acyl-carrier-protein] dehydratase FabZ (154 aa).

His59 is a catalytic residue.

The protein belongs to the thioester dehydratase family. FabZ subfamily.

The protein resides in the cytoplasm. The catalysed reaction is a (3R)-hydroxyacyl-[ACP] = a (2E)-enoyl-[ACP] + H2O. In terms of biological role, involved in unsaturated fatty acids biosynthesis. Catalyzes the dehydration of short chain beta-hydroxyacyl-ACPs and long chain saturated and unsaturated beta-hydroxyacyl-ACPs. This chain is 3-hydroxyacyl-[acyl-carrier-protein] dehydratase FabZ, found in Bartonella bacilliformis (strain ATCC 35685 / KC583 / Herrer 020/F12,63).